Here is a 1487-residue protein sequence, read N- to C-terminus: MVSSGCRMRSLWFIIIISFSPSTEGFSRAALPFGLVRRELSCEGYSIDLRCPGSDVIMIESANYGRTDDKICDADPFQMENTDCYLPDAFKIMTQRCNNRTQCIVVTGSDVFPDPCPGTYKYLEVQYECVPYSKMLVFVCPGTLKAIVDSPCIYEAEQKSGAWCKDPLQAADKIYFMPWTPYRTDTLIEYASLEDFQNSRQTTTYKLPNRVDGTGFVVYDGAVFFNKERTRNIVKFDLRTRIKSGEAIINYANYHDTSPYRWGGKTDIDLAVDENGLWVIYATEQNNGMIVISQLNPYTLRFEATWETAYDKRAASNAFMICGVLYVVRSVYQDNESEAGKNTIDYIYNTRLSRGEYVDVPFPNQYQYIAAVDYNPRDNQLYVWNNNFILRYSLEFGPPDPAQVPTTAVTITSSAELFKTTISTTSSASQRGPVSSTAAGPQDGSRGTKPPPAVSTTKIPPVTNIFPLPERFCEALDWKGIKWPQTQRGMMVERPCPKGTRGTASYLCMASTGTWNPKGPDLSNCTSHWVNQLAQKIRSGENAASLANELAKHTKGHVFAGDVSSSVRLMEQLVDILDAQLQELKPSEKDSAGRSYNKLQKREKTCRAYLKAIVDTVDNLLRAEALESWKHMNSSEQAHTATMLLDTLEEGAFVLADNLLEPTRVSMPTENIVLEVAVLSTEGQVQDFKFPLGLKGLGSSIQLSANTVKQNSRNGLAKLVFIIYRSLGQFLSTENATIKLGADLMGRNSTIAVNSPVISVSINKESSRVYLTDPVLFTLPHIDPDNYFNANCSFWNYSERTMMGYWSTQGCKLVDTNKTRTTCACSHLTNFAILMAHREIAYKDGVHHLLLTVITWVGIVVSLVCLAICIFTFCFFRGLQSDRNTIHKNLCINLFIAEFIFLIGIDKTKYTIACPVFAGLLHFFFLAAFSWMCLEGVQLYLMLVEVFESEYSRKKYYYVAGYLFPATVVGVSAAIDYKSYGTVQACWLHVDNYFIWSFIGPVTFIILLNIIFLVITLCKMVKHSNTLKPDSSRLENINNYRVCDGYYNTDLPGYEDNKPFIKSWVLGAFALLCLLGLTWSFGLLFVNEETVVMAYLFTAFNAFQGLFIFIFHCALQKKVRKEYGKCFRHWYCCGGLPTESPHSSVKASTTRTSARYSSGTQSRIRRMWNDTVRKQSESSFISGDINSTSTLNQGMTGNYLLTNPLLRPHGTNNPYNTLLAETVVCNAPSAPAFNSPGHSLNNARDTSAMDTLPLNGNFNNSYSLRKADYHDGVQVVDCGLSLNDTAFEKMIISELVHNNLRGGNKTHNLELKLPVKPVIGGSSSEDDAIVADASSLMHGDNPGLEFRHKELEAPLIPQRTHSLLYQPQKKVKPEATDSYVSQLTAEADDHLQSPNRDSLYTSMPNLRDSPYPESSPDMAEDLSPSRRSENEDIYYKSMPNLGAGRHLHMCYQISRGNSDGYIIPINKEGCIPEGDVREGQMQLVTSL.

Residues 1-25 form the signal peptide; the sequence is MVSSGCRMRSLWFIIIISFSPSTEG. Residues 26 to 855 lie on the Extracellular side of the membrane; that stretch reads FSRAALPFGL…VHHLLLTVIT (830 aa). Positions 41 to 130 constitute an SUEL-type lectin domain; sequence SCEGYSIDLR…KYLEVQYECV (90 aa). Residue Asn99 is glycosylated (N-linked (GlcNAc...) asparagine). One can recognise an Olfactomedin-like domain in the interval 139-398; the sequence is VCPGTLKAIV…ILRYSLEFGP (260 aa). The segment covering 423–439 has biased composition (polar residues); sequence STTSSASQRGPVSSTAA. The tract at residues 423–461 is disordered; that stretch reads STTSSASQRGPVSSTAAGPQDGSRGTKPPPAVSTTKIPP. Asn524 and Asn735 each carry an N-linked (GlcNAc...) asparagine glycan. Positions 663 to 841 constitute a GAIN-B domain; that stretch reads TRVSMPTENI…AILMAHREIA (179 aa). Disulfide bonds link Cys792–Cys823 and Cys811–Cys825. The GPS stretch occupies residues 792–841; the sequence is CSFWNYSERTMMGYWSTQGCKLVDTNKTRTTCACSHLTNFAILMAHREIA. The interval 829 to 841 is stachel; sequence TNFAILMAHREIA. The helical transmembrane segment at 856-876 threads the bilayer; the sequence is WVGIVVSLVCLAICIFTFCFF. The Cytoplasmic segment spans residues 877-884; sequence RGLQSDRN. Residues 885–905 form a helical membrane-spanning segment; sequence TIHKNLCINLFIAEFIFLIGI. Residues 906–911 lie on the Extracellular side of the membrane; sequence DKTKYT. A helical transmembrane segment spans residues 912–932; it reads IACPVFAGLLHFFFLAAFSWM. At 933–955 the chain is on the cytoplasmic side; it reads CLEGVQLYLMLVEVFESEYSRKK. A helical membrane pass occupies residues 956 to 976; the sequence is YYYVAGYLFPATVVGVSAAID. Over 977 to 994 the chain is Extracellular; that stretch reads YKSYGTVQACWLHVDNYF. Residues 995-1015 traverse the membrane as a helical segment; the sequence is IWSFIGPVTFIILLNIIFLVI. Over 1016 to 1064 the chain is Cytoplasmic; that stretch reads TLCKMVKHSNTLKPDSSRLENINNYRVCDGYYNTDLPGYEDNKPFIKSW. A helical transmembrane segment spans residues 1065 to 1085; the sequence is VLGAFALLCLLGLTWSFGLLF. At 1086-1090 the chain is on the extracellular side; that stretch reads VNEET. The helical transmembrane segment at 1091–1111 threads the bilayer; it reads VVMAYLFTAFNAFQGLFIFIF. Positions 1386–1430 are disordered; the sequence is EADDHLQSPNRDSLYTSMPNLRDSPYPESSPDMAEDLSPSRRSEN. A compositionally biased stretch (polar residues) spans 1392–1404; sequence QSPNRDSLYTSMP. Phosphoserine occurs at positions 1402, 1437, and 1458.

This sequence belongs to the G-protein coupled receptor 2 family. Adhesion G-protein coupled receptor (ADGR) subfamily. As to quaternary structure, heterodimer of 2 chains generated by proteolytic processing; the large extracellular N-terminal fragment and the membrane-bound C-terminal fragment predominantly remain associated and non-covalently linked. Autoproteolytically processed at the GPS region of the GAIN-B domain; this cleavage modulates receptor activity. Ubiquitously expressed. In neurons, specifically localizes to dendritic domains of CA1 pyramidal neurons in the S. lacunosummoleculare.

It is found in the postsynaptic cell membrane. Forms a heterodimer of 2 chains generated by proteolytic processing that remain associated through non-covalent interactions mediated by the GAIN-B domain. In the inactivated receptor, the Stachel sequence (also named stalk) is embedded in the GAIN-B domain, where it adopts a beta-strand conformation. On activation, the Stachel moves into the 7 transmembrane region and adopts a twisted hook-shaped configuration that forms contacts within the receptor, leading to coupling of a G-alpha protein, which activates signaling. The cleaved GAIN-B and N-terminal domains can then dissociate from the rest of the receptor. Functionally, orphan adhesion G-protein coupled receptor (aGPCR), which mediates synapse specificity. Ligand binding causes a conformation change that triggers signaling via guanine nucleotide-binding proteins (G proteins) and modulates the activity of downstream effectors. Following G-protein coupled receptor activation, associates with cell adhesion molecules that are expressed at the surface of adjacent cells to direct synapse specificity. Specifically mediates the establishment of perforant-path synapses on CA1-region pyramidal neurons in the hippocampus. Localizes to postsynaptic spines in excitatory synapses in the S.lacunosum-moleculare and interacts with presynaptic cell adhesion molecules, such as teneurins, promoting synapse formation. The sequence is that of Adhesion G protein-coupled receptor L2 from Mus musculus (Mouse).